Here is a 294-residue protein sequence, read N- to C-terminus: 3-methyl-2-oxobutanoate hydroxymethyltransferase 1 (294 aa).

Asp-55 is a Mg(2+) binding site. Residues Asp-55–Ser-56 and Lys-123 each bind 3-methyl-2-oxobutanoate. Catalysis depends on Glu-192, which acts as the Proton acceptor.

This sequence belongs to the PanB family. As to quaternary structure, homodecamer; pentamer of dimers. Mg(2+) is required as a cofactor.

It is found in the cytoplasm. It catalyses the reaction 3-methyl-2-oxobutanoate + (6R)-5,10-methylene-5,6,7,8-tetrahydrofolate + H2O = 2-dehydropantoate + (6S)-5,6,7,8-tetrahydrofolate. Its pathway is cofactor biosynthesis; (R)-pantothenate biosynthesis; (R)-pantoate from 3-methyl-2-oxobutanoate: step 1/2. In terms of biological role, catalyzes the reversible reaction in which hydroxymethyl group from 5,10-methylenetetrahydrofolate is transferred onto alpha-ketoisovalerate to form ketopantoate. In Methylibium petroleiphilum (strain ATCC BAA-1232 / LMG 22953 / PM1), this protein is 3-methyl-2-oxobutanoate hydroxymethyltransferase 1.